A 292-amino-acid polypeptide reads, in one-letter code: 33 kDa chaperonin (292 aa).

Cystine bridges form between cysteine 237–cysteine 239 and cysteine 270–cysteine 273.

The protein belongs to the HSP33 family. Under oxidizing conditions two disulfide bonds are formed involving the reactive cysteines. Under reducing conditions zinc is bound to the reactive cysteines and the protein is inactive.

It localises to the cytoplasm. Redox regulated molecular chaperone. Protects both thermally unfolding and oxidatively damaged proteins from irreversible aggregation. Plays an important role in the bacterial defense system toward oxidative stress. In Lachnoclostridium phytofermentans (strain ATCC 700394 / DSM 18823 / ISDg) (Clostridium phytofermentans), this protein is 33 kDa chaperonin.